Consider the following 92-residue polypeptide: Small ribosomal subunit protein uS19c (92 aa).

This sequence belongs to the universal ribosomal protein uS19 family.

The protein resides in the plastid. The protein localises to the chloroplast. Protein S19 forms a complex with S13 that binds strongly to the 16S ribosomal RNA. The chain is Small ribosomal subunit protein uS19c from Nasturtium officinale (Watercress).